Consider the following 548-residue polypeptide: Putative malate oxidoreductase [NAD] (548 aa).

The Proton donor role is filled by Tyr96. The active-site Proton acceptor is Lys169. A divalent metal cation is bound by residues Glu240, Asp241, and Asp264. NAD(+) is bound by residues 297–300 (AGTA), Asn410, and Asn455.

It belongs to the malic enzymes family. Mg(2+) is required as a cofactor. The cofactor is Mn(2+).

It carries out the reaction (S)-malate + NAD(+) = pyruvate + CO2 + NADH. The enzyme catalyses oxaloacetate + H(+) = pyruvate + CO2. This Mycobacterium tuberculosis (strain CDC 1551 / Oshkosh) protein is Putative malate oxidoreductase [NAD] (mez).